Reading from the N-terminus, the 318-residue chain is Inner membrane protein YbhN (318 aa).

Over 1 to 13 (MSKSHPRWRLAKK) the chain is Periplasmic. Residues 14-34 (ILTWLFFIAVIVLLVVYAKKV) traverse the membrane as a helical segment. Residues 35 to 50 (DWEEVWKVIRDYNRVA) lie on the Cytoplasmic side of the membrane. Residues 51 to 71 (LLSAVGLVVVSYLIYGCYDLL) form a helical membrane-spanning segment. Residues 72-85 (ARFYCGHKLAKRQV) are Periplasmic-facing. A helical transmembrane segment spans residues 86–106 (MLVSFICYAFNLTLSTWVGGI). Residues 107-125 (GMRYRLYSRLGLPGSTITR) lie on the Cytoplasmic side of the membrane. Residues 126–146 (IFSLSITTNWLGYILLAGIIF) traverse the membrane as a helical segment. The Periplasmic segment spans residues 147–165 (TAGVVELPDHWYVDQTTLR). The helical transmembrane segment at 166 to 186 (ILGIGLLMIIAVYLWFCAFAK) threads the bilayer. The Cytoplasmic portion of the chain corresponds to 187–205 (HRHMTIKGQKLVLPSWKFA). The helical transmembrane segment at 206 to 226 (LAQMLISSVNWMVMGAIIWLL) threads the bilayer. Residues 227 to 233 (LGQSVNY) lie on the Periplasmic side of the membrane. 2 helical membrane passes run 234-254 (FFVL…HIPA) and 255-275 (GIGV…TSKG). At 276–277 (TI) the chain is on the periplasmic side. A helical transmembrane segment spans residues 278 to 298 (IAALLAYRVLYYFIPLLLALI). The Cytoplasmic segment spans residues 299–318 (CYLLLESQAKKLRAKNEAAM).

The protein to Synechocystis PCC 6803 slr0712.

The protein localises to the cell inner membrane. In Escherichia coli (strain K12), this protein is Inner membrane protein YbhN (ybhN).